Here is a 432-residue protein sequence, read N- to C-terminus: Putative cyclin-F1-4 (432 aa).

It belongs to the cyclin family. Cyclin F subfamily.

This is Putative cyclin-F1-4 (CycF1-4) from Oryza sativa subsp. japonica (Rice).